The primary structure comprises 426 residues: Potassium channel subfamily K member 2 (426 aa).

Topologically, residues 1 to 61 (MLPSASRERP…TTINVMKWKT (61 aa)) are cytoplasmic. Important for GNG4 binding and L-glutamate release in astrocytes regions lie at residues 17 to 38 (AAPDLLDPKSAAQNSKPRLSFS) and 51 to 61 (DTTINVMKWKT). A helical transmembrane segment spans residues 62–82 (VSTIFLVVVLYLIIGATVFKA). Asparagine 110 and asparagine 134 each carry an N-linked (GlcNAc...) asparagine glycan. Residues 144 to 170 (LGSSFFFAGTVITTIGFGNISPRTEGG) constitute an intramembrane region (pore-forming). 4 residues coordinate K(+): threonine 157, isoleucine 158, glycine 159, and phenylalanine 160. The selectivity filter 1 stretch occupies residues 157–162 (TIGFGN). The chain crosses the membrane as a helical span at residues 172–192 (IFCIIYALLGIPLFGFLLAGV). Over 193 to 223 (GDQLGTIFGKGIAKVEDTFIKWNVSQTKIRI) the chain is Cytoplasmic. A helical transmembrane segment spans residues 224–244 (ISTIIFILFGCVLFVALPAII). Residues 253–283 (ALDAIYFVVITLTTIGFGDYVAGGSDIEYLD) constitute an intramembrane region (pore-forming). Residues threonine 266, isoleucine 267, glycine 268, and phenylalanine 269 each coordinate K(+). The tract at residues 266–271 (TIGFGD) is selectivity filter 2. Residues 288–308 (VVWFWILVGLAYFAAVLSMIG) form a helical membrane-spanning segment. Residues 309-426 (DWLRVISKKT…EEIAVIENIK (118 aa)) are Cytoplasmic-facing. An interaction with AKAP5 region spans residues 313–326 (VISKKTKEEVGEFR). The interval 337–385 (TAEFKETRRRLSVEIYDKFQRATSIKRKLSAELAGNHNQELTPCRRTLS) is essential for chloroform and halothane sensitivity. Position 348 is a phosphoserine; by PKA (serine 348).

It belongs to the two pore domain potassium channel (TC 1.A.1.8) family. Homodimer; disulfide-linked. Forms heterodimers with other 2-pore domain K(+) channel subunits, such as KCNK1, KCNK4, KCNK10 and KCNK18. Interacts with AKAP5; the channel is recruited to postsynaptic microdomains by AKAP5 where it can integrate neurotransmitter receptor signals. Part of a complex composed of AKAP5 and ADRB2. Upon AKAP5 binding, the channel is no longer sensitive to intracellular acidification, membrane stretch or arachidonic acid stimuli. Interacts with POPDC1; the interaction enhances KCNK2 surface expression and is inhibited by cAMP. Interacts (via N-terminus) with G-protein subunit GNG4 (via C-terminus); this interaction confers ion selectivity to L-glutamate and Cl(-) anions. Post-translationally, phosphorylation at Ser-348 controls the reversible conversion from a leak channel to a voltage-dependent channel. In terms of tissue distribution, detected in kidney, adrenal gland and brain where it is preferentially expressed in the amygdala but not found in thalamus, hypothalamus, hippocampus or substantia nigra.

The protein localises to the cell membrane. It is found in the endoplasmic reticulum membrane. Its subcellular location is the cell projection. The protein resides in the axon. It localises to the dendrite. The protein localises to the postsynaptic density membrane. It is found in the sarcolemma. The enzyme catalyses K(+)(in) = K(+)(out). It catalyses the reaction L-glutamate(out) = L-glutamate(in). The catalysed reaction is chloride(in) = chloride(out). It carries out the reaction Rb(+)(in) = Rb(+)(out). The enzyme catalyses Cs(+)(in) = Cs(+)(out). Its activity is regulated as follows. Activated by various stimuli including intracellular acidic pH, mechanical stretch and polyunsaturated fatty acids such as arachidonic acid. Activated by volatile anesthetics such as chloroform, halothane, and isoflurane. K(+) channel that conducts voltage-dependent outward rectifying currents upon membrane depolarization. Voltage sensing is coupled to K(+) electrochemical gradient in an 'ion flux gating' mode where outward but not inward ion flow opens the gate. Converts to voltage-independent 'leak' conductance mode upon stimulation by various stimuli including mechanical membrane stretch, acidic pH, heat and lipids. Reversibly converts between a voltage-insensitive K(+) 'leak' channel and a voltage-dependent outward rectifying K(+) channel in a phosphorylation-dependent manner. Homo- and heterodimerizes to form functional channels with distinct regulatory and gating properties. In trigeminal ganglia sensory neurons, the heterodimer of KCNK2/TREK-1 and KCNK18/TRESK inhibits neuronal firing and neurogenic inflammation by stabilizing the resting membrane potential at K(+) equilibrium potential as well as by regulating the threshold of action potentials and the spike frequency. At trigeminal A-beta afferent nerves, the heterodimer of KCNK2/TREK-1 and KCNK4/TRAAK is mostly coexpressed at nodes of Ranvier where it conducts voltage-independent mechanosensitive and thermosensitive currents, allowing rapid action potential repolarization, high speed and high frequence saltatory conduction on myelinated nerves to ensure prompt sensory responses. In hippocampal astrocytes, the heterodimer of KCNK2/TREK-1 and KCNK1/TWIK-1 allows passive K(+) conductance under basal conditions, but changes ion selectivity and becomes permeable to L-glutamate and Cl(-) ions upon binding to G-protein subunit GNG4 in stimulated astrocytes. Mediates rapid L-glutamate release in response to activation of G-protein-coupled receptors, such as F2R and CNR1. In hippocampal pyramidal neurons, the homodimer of KCNK2/TREK-1 contributes to gamma-aminobutyric acid (GABA) B-induced slow inhibitory postsynaptic potential. Associates with AKAP5 and Gs-protein-coupled receptor B2AR at postsynaptic dense bodies and converts to a leak channel no longer sensitive to stimulation by arachidonic acid, acidic pH or mechanical stress, nor inhibited by Gq-coupled receptors but still under the negative control of Gs-coupled receptors. Permeable to other monovalent cations such as Rb(+) and Cs(+). Its function is as follows. Does not display channel activity but reduces the channel activity of isoform 1 and isoform 2 and reduces cell surface expression of isoform 2. The polypeptide is Potassium channel subfamily K member 2 (Homo sapiens (Human)).